The sequence spans 164 residues: Cyclin-dependent kinase inhibitor 1 (164 aa).

Ser-2 is subject to N-acetylserine. A Glycyl serine ester (Ser-Gly) (interchain with G-Cter in ubiquitin) cross-link involves residue Ser-2. The C4-type zinc finger occupies 13-41; the sequence is HGSKACRRLFGPVDSEQLRRDCDALMAGC. A required for binding cyclins region spans residues 17-24; that stretch reads ACRRLFGP. The required for binding CDKs stretch occupies residues 53-58; it reads FVTETP. The interval 80–164 is disordered; the sequence is AGPRGGRDDL…RRLIFSKRKP (85 aa). At Ser-114 the chain carries Phosphoserine; by GSK3-beta. Ser-130 carries the post-translational modification Phosphoserine. Positions 140–164 match the PIP-box K+4 motif motif; that stretch reads RKRRQTSMTDFYHSKRRLIFSKRKP. Positions 141–156 match the Nuclear localization signal motif; sequence KRRQTSMTDFYHSKRR. Thr-145 carries the phosphothreonine; by PKA, PKB/AKT1, PIM1 and PIM2 modification. Phosphoserine; by PKC and NUAK1 is present on Ser-146. The segment at 152–164 is interaction with TRIM39; that stretch reads HSKRRLIFSKRKP. Residues 153–164 show a composition bias toward basic residues; that stretch reads SKRRLIFSKRKP. Ser-160 carries the post-translational modification Phosphoserine.

This sequence belongs to the CDI family. As to quaternary structure, interacts with HDAC1; the interaction is prevented by competitive binding of C10orf90/FATS to HDAC1 facilitating acetylation and protein stabilization of CDKN1A/p21. Interacts with MKRN1. Interacts with PSMA3. Interacts with PCNA. Component of the ternary complex, cyclin D-CDK4-CDKN1A. Interacts (via its N-terminal domain) with CDK4; the interaction promotes the assembly of the cyclin D-CDK4 complex, its nuclear translocation and promotes the cyclin D-dependent enzyme activity of CDK4. Binding to CDK2 leads to CDK2/cyclin E inactivation at the G1-S phase DNA damage checkpoint, thereby arresting cells at the G1-S transition during DNA repair. Interacts with PIM1. Interacts with STK11 and NUAK1. Interacts with DTL and TRIM39. Interacts with PKP3; the interaction sequesters CDKN1A to the cytoplasm thereby repressing its role as an inhibitor of CDK4- and CDK6-driven RB1 phosphorylation. Post-translationally, phosphorylation of Thr-145 by Akt or of Ser-146 by PKC impairs binding to PCNA. Phosphorylation at Ser-114 by GSK3-beta enhances ubiquitination by the DCX(DTL) complex. Phosphorylation of Thr-145 by PIM2 enhances protein stability and inhibits cell proliferation. Phosphorylation of Thr-145 by PIM1 results in the relocation of CDKN1A to the cytoplasm and enhanced CDKN1A protein stability. UV radiation-induced phosphorylation at Ser-146 by NUAK1 leads to its degradation. Ubiquitinated by MKRN1; leading to polyubiquitination and 26S proteasome-dependent degradation. Ubiquitinated by the DCX(DTL) complex, also named CRL4(CDT2) complex, leading to its degradation during S phase or following UV irradiation. Ubiquitination by the DCX(DTL) complex is essential to control replication licensing and is PCNA-dependent: interacts with PCNA via its PIP-box, while the presence of the containing the 'K+4' motif in the PIP box, recruit the DCX(DTL) complex, leading to its degradation. Ubiquitination at Ser-2 leads to degradation by the proteasome pathway. Ubiquitinated by RNF114; leading to proteasomal degradation. In terms of processing, acetylation leads to protein stability. Acetylated in vitro on Lys-141, Lys-154, Lys-161 and Lys-163. Deacetylation by HDAC1 is prevented by competitive binding of C10orf90/FATS to HDAC1.

It is found in the cytoplasm. The protein localises to the nucleus. Functionally, may be involved in p53/TP53 mediated inhibition of cellular proliferation in response to DNA damage. Binds to and inhibits cyclin-dependent kinase activity, preventing phosphorylation of critical cyclin-dependent kinase substrates and blocking cell cycle progression. Functions in the nuclear localization and assembly of cyclin D-CDK4 complex and promotes its kinase activity towards RB1. At higher stoichiometric ratios, inhibits the kinase activity of the cyclin D-CDK4 complex. Inhibits DNA synthesis by DNA polymerase delta by competing with POLD3 for PCNA binding. Plays an important role in controlling cell cycle progression and DNA damage-induced G2 arrest. Negatively regulates the CDK4- and CDK6-driven phosphorylation of RB1 in keratinocytes, thereby resulting in the release of E2F1 and subsequent transcription of E2F1-driven G1/S phase promoting genes. The sequence is that of Cyclin-dependent kinase inhibitor 1 (CDKN1A) from Felis catus (Cat).